A 581-amino-acid polypeptide reads, in one-letter code: DNA polymerase alpha subunit B (581 aa).

This sequence belongs to the DNA polymerase alpha subunit B family. As to quaternary structure, DNA polymerase alpha:primase is a four subunit enzyme complex, which is assembled throughout the cell cycle, and consists of the two DNA polymerase subunits A and B, and the DNA primase large and small subunits. Subunit B binds to subunit A.

Its subcellular location is the nucleus. In terms of biological role, may play an essential role at the early stage of chromosomal DNA replication by coupling the polymerase alpha/primase complex to the cellular replication machinery. Required for the distribution of pie-1 in cell divsion. In Caenorhabditis elegans, this protein is DNA polymerase alpha subunit B (div-1).